A 293-amino-acid chain; its full sequence is Fructose-bisphosphate aldolase (293 aa).

Ser50 is a binding site for D-glyceraldehyde 3-phosphate. Catalysis depends on Asp85, which acts as the Proton donor. Zn(2+)-binding residues include His86, Asp106, Glu136, and His178. Gly179 contacts dihydroxyacetone phosphate. His208 provides a ligand contact to Zn(2+). Residues 209-211 and 230-233 contribute to the dihydroxyacetone phosphate site; these read GGS and NVNT.

Belongs to the class II fructose-bisphosphate aldolase family. Requires Zn(2+) as cofactor.

The enzyme catalyses beta-D-fructose 1,6-bisphosphate = D-glyceraldehyde 3-phosphate + dihydroxyacetone phosphate. It functions in the pathway carbohydrate degradation; glycolysis; D-glyceraldehyde 3-phosphate and glycerone phosphate from D-glucose: step 4/4. Its function is as follows. Catalyzes the aldol condensation of dihydroxyacetone phosphate (DHAP or glycerone-phosphate) with glyceraldehyde 3-phosphate (G3P) to form fructose 1,6-bisphosphate (FBP) in gluconeogenesis and the reverse reaction in glycolysis. The sequence is that of Fructose-bisphosphate aldolase (fba) from Streptococcus pyogenes serotype M6 (strain ATCC BAA-946 / MGAS10394).